A 581-amino-acid polypeptide reads, in one-letter code: Moesin/ezrin/radixin homolog 1 (581 aa).

In terms of domain architecture, FERM spans 8–298 (MNVRVTTMDA…GNHELYMRRR (291 aa)). Residues 452 to 519 (QVAKGSRAAA…EERRTLAERN (68 aa)) form a disordered region. Low complexity predominate over residues 459–469 (AAAALQAATTT). The segment covering 477 to 486 (EEEENEEELI) has biased composition (acidic residues). The segment covering 495-519 (FSKDFDTDEHIKDPVEERRTLAERN) has biased composition (basic and acidic residues). Thr562 is subject to Phosphothreonine.

As to quaternary structure, interacts with cytoskeletal actin.

The protein resides in the cell junction. It is found in the adherens junction. Its subcellular location is the cell projection. The protein localises to the microvillus. It localises to the rhabdomere. The protein resides in the cell membrane. It is found in the cytoplasm. Its subcellular location is the cytoskeleton. Functionally, involved in connections of major cytoskeletal structures to the plasma membrane. This Anopheles gambiae (African malaria mosquito) protein is Moesin/ezrin/radixin homolog 1.